The primary structure comprises 315 residues: ATP synthase gamma chain (315 aa).

The protein belongs to the ATPase gamma chain family. As to quaternary structure, F-type ATPases have 2 components, CF(1) - the catalytic core - and CF(0) - the membrane proton channel. CF(1) has five subunits: alpha(3), beta(3), gamma(1), delta(1), epsilon(1). CF(0) has three main subunits: a, b and c.

It is found in the cell membrane. In terms of biological role, produces ATP from ADP in the presence of a proton gradient across the membrane. The gamma chain is believed to be important in regulating ATPase activity and the flow of protons through the CF(0) complex. The polypeptide is ATP synthase gamma chain (Latilactobacillus sakei subsp. sakei (strain 23K) (Lactobacillus sakei subsp. sakei)).